The chain runs to 424 residues: MNKLVIRGGKKLSGTVAASGSKNSALPVIAATLLTPDGTFGINRIPDLKDVRTFIQLLEYLGAAVSFENNRLEVSSSDLKSIEAPYELVKKMRASIYVLGPLLARFGHTRVSLPGGCAFGPRPVDLHIMAMEKLGATVTIEQGFIDAKVNGSRLRGAEIDFPISSVGATGNALMAAVTAEGKTVLQNAALEPEIECLCRFLQKMGANISGIGTTTLVIEGVDQLKAVEFDNIFDRIEAGTLLGAAAITGGSVTVTGTVPEHLGSVLDAFRQAGCIVTVKDDAITLTAPEELQPVDITARPYPEFPTDMQAQWMALMTQAHGDSTIIDRIYLERFNHLPELNRLGAHIEIRDNWALVHGPQELTGTKVMSTDLRASACLVLAGLVAKETTEVLRVYHLDRGYESIEKKLSALGADIKREQYQEFS.

Position 22–23 (22–23) interacts with phosphoenolpyruvate; it reads KN. Arg93 serves as a coordination point for UDP-N-acetyl-alpha-D-glucosamine. The Proton donor role is filled by Cys117. A 2-(S-cysteinyl)pyruvic acid O-phosphothioketal modification is found at Cys117. Residues 122–126, Asp307, and Ile329 contribute to the UDP-N-acetyl-alpha-D-glucosamine site; that span reads RPVDL.

The protein belongs to the EPSP synthase family. MurA subfamily.

It localises to the cytoplasm. The catalysed reaction is phosphoenolpyruvate + UDP-N-acetyl-alpha-D-glucosamine = UDP-N-acetyl-3-O-(1-carboxyvinyl)-alpha-D-glucosamine + phosphate. It participates in cell wall biogenesis; peptidoglycan biosynthesis. Its function is as follows. Cell wall formation. Adds enolpyruvyl to UDP-N-acetylglucosamine. This chain is UDP-N-acetylglucosamine 1-carboxyvinyltransferase, found in Chlorobaculum parvum (strain DSM 263 / NCIMB 8327) (Chlorobium vibrioforme subsp. thiosulfatophilum).